A 468-amino-acid polypeptide reads, in one-letter code: UDP-N-acetylmuramate--L-alanine ligase (468 aa).

116 to 122 (GTHGKTT) contacts ATP.

It belongs to the MurCDEF family.

It localises to the cytoplasm. The catalysed reaction is UDP-N-acetyl-alpha-D-muramate + L-alanine + ATP = UDP-N-acetyl-alpha-D-muramoyl-L-alanine + ADP + phosphate + H(+). It participates in cell wall biogenesis; peptidoglycan biosynthesis. Cell wall formation. The sequence is that of UDP-N-acetylmuramate--L-alanine ligase from Fusobacterium nucleatum subsp. nucleatum (strain ATCC 25586 / DSM 15643 / BCRC 10681 / CIP 101130 / JCM 8532 / KCTC 2640 / LMG 13131 / VPI 4355).